We begin with the raw amino-acid sequence, 371 residues long: Neutral protease 2 homolog MGYG_03465 (371 aa).

A signal peptide spans 1–19 (MQFVAVLAALGALVAPAAA). The propeptide occupies 20–188 (YPHAPMNETL…SIHARALEKR (169 aa)). 2 cysteine pairs are disulfide-bonded: C196-C267 and C274-C292. H316 provides a ligand contact to Zn(2+). The active site involves E317. Zn(2+) is bound by residues H320 and D331.

The protein belongs to the peptidase M35 family. Zn(2+) is required as a cofactor.

It is found in the secreted. It carries out the reaction Preferential cleavage of bonds with hydrophobic residues in P1'. Also 3-Asn-|-Gln-4 and 8-Gly-|-Ser-9 bonds in insulin B chain.. In terms of biological role, secreted metalloproteinase that allows assimilation of proteinaceous substrates. Shows high activities on basic nuclear substrates such as histone and protamine. May be involved in virulence. The polypeptide is Neutral protease 2 homolog MGYG_03465 (Arthroderma gypseum (strain ATCC MYA-4604 / CBS 118893) (Microsporum gypseum)).